We begin with the raw amino-acid sequence, 372 residues long: Cell division protein FtsZ 1 (372 aa).

GTP-binding positions include 51 to 55 (GAGCN), 138 to 140 (GTG), glutamate 169, arginine 173, and aspartate 216. Residues 350 to 360 (PEEETPLETPE) are compositionally biased toward acidic residues. The interval 350 to 372 (PEEETPLETPEESPSIEISIPEL) is disordered. Over residues 361 to 372 (ESPSIEISIPEL) the composition is skewed to low complexity.

This sequence belongs to the FtsZ family. As to quaternary structure, homodimer. Polymerizes to form a dynamic ring structure in a strictly GTP-dependent manner. Interacts directly with several other division proteins.

The protein localises to the cytoplasm. Essential cell division protein that forms a contractile ring structure (Z ring) at the future cell division site. The regulation of the ring assembly controls the timing and the location of cell division. One of the functions of the FtsZ ring is to recruit other cell division proteins to the septum to produce a new cell wall between the dividing cells. Binds GTP and shows GTPase activity. This chain is Cell division protein FtsZ 1, found in Pyrococcus furiosus (strain ATCC 43587 / DSM 3638 / JCM 8422 / Vc1).